The following is a 121-amino-acid chain: Large ribosomal subunit protein uL14c (121 aa).

Component of the chloroplast large ribosomal subunit (LSU). Mature 70S chloroplast ribosomes of higher plants consist of a small (30S) and a large (50S) subunit. The 30S small subunit contains 1 molecule of ribosomal RNA (16S rRNA) and 24 different proteins. The 50S large subunit contains 3 rRNA molecules (23S, 5S and 4.5S rRNA) and 33 different proteins.

It is found in the plastid. The protein localises to the chloroplast. Functionally, component of the chloroplast ribosome (chloro-ribosome), a dedicated translation machinery responsible for the synthesis of chloroplast genome-encoded proteins, including proteins of the transcription and translation machinery and components of the photosynthetic apparatus. The protein is Large ribosomal subunit protein uL14c of Spinacia oleracea (Spinach).